The sequence spans 300 residues: Junctional adhesion molecule A (300 aa).

The first 26 residues, 1–26 (MGTEGKAGSKLLFLFTSMILGSLVQG), serve as a signal peptide directing secretion. Over 27–238 (KGSVYSPQTA…MEAVELNVGG (212 aa)) the chain is Extracellular. Ig-like V-type domains are found at residues 28-122 (GSVY…GEVS) and 134-228 (PTVS…EAVR). 2 cysteine pairs are disulfide-bonded: Cys49/Cys108 and Cys152/Cys212. An N-linked (GlcNAc...) asparagine glycan is attached at Asn185. Residues 239-259 (IVAAVLVTLILLGLLIFGIWF) traverse the membrane as a helical segment. The Cytoplasmic portion of the chain corresponds to 260–300 (AYSRGYFERTKKGTAPGKKVIYSQPSARSEGEFKQTSSFLV). Ser282, Ser285, and Ser288 each carry phosphoserine.

This sequence belongs to the immunoglobulin superfamily. Interacts with the ninth PDZ domain of MPDZ. Interacts with the first PDZ domain of PARD3. The association between PARD3 and PARD6B probably disrupts this interaction. Interacts with ITGAL (via I-domain). Interacts with CD151. N-glycosylated.

The protein localises to the cell junction. The protein resides in the tight junction. It is found in the cell membrane. Its function is as follows. Seems to play a role in epithelial tight junction formation. Appears early in primordial forms of cell junctions and recruits PARD3. The association of the PARD6-PARD3 complex may prevent the interaction of PARD3 with JAM1, thereby preventing tight junction assembly. Plays a role in regulating monocyte transmigration involved in integrity of epithelial barrier. Ligand for integrin alpha-L/beta-2 involved in memory T-cell and neutrophil transmigration. The chain is Junctional adhesion molecule A (F11r) from Rattus norvegicus (Rat).